Consider the following 266-residue polypeptide: Cytochrome c oxidase subunit 2 (266 aa).

Residues 1–43 (MTITNYINNQFTFLDMAEPWQLGFQDPATPVMEGIINFHHDLM) are Mitochondrial intermembrane-facing. Residues 44-64 (FFLISIVVFVCWMLFRVITLF) traverse the membrane as a helical segment. Residues 65–82 (DEKKNKIPATVVHGATIE) are Mitochondrial matrix-facing. The chain crosses the membrane as a helical span at residues 83–103 (IIWTSIPALILLTVAVPSFAL). At 104-266 (LYSMDEVIDP…NVXLIKFYGI (163 aa)) the chain is on the mitochondrial intermembrane side. Positions 186, 221, 223, 225, 229, and 232 each coordinate Cu cation. Residue Glu-223 coordinates Mg(2+).

It belongs to the cytochrome c oxidase subunit 2 family. Component of the cytochrome c oxidase (complex IV, CIV), a multisubunit enzyme composed of a catalytic core of 3 subunits and several supernumerary subunits. The complex exists as a monomer or a dimer and forms supercomplexes (SCs) in the inner mitochondrial membrane with ubiquinol-cytochrome c oxidoreductase (cytochrome b-c1 complex, complex III, CIII). Cu cation serves as cofactor.

It localises to the mitochondrion inner membrane. It catalyses the reaction 4 Fe(II)-[cytochrome c] + O2 + 8 H(+)(in) = 4 Fe(III)-[cytochrome c] + 2 H2O + 4 H(+)(out). Component of the cytochrome c oxidase, the last enzyme in the mitochondrial electron transport chain which drives oxidative phosphorylation. The respiratory chain contains 3 multisubunit complexes succinate dehydrogenase (complex II, CII), ubiquinol-cytochrome c oxidoreductase (cytochrome b-c1 complex, complex III, CIII) and cytochrome c oxidase (complex IV, CIV), that cooperate to transfer electrons derived from NADH and succinate to molecular oxygen, creating an electrochemical gradient over the inner membrane that drives transmembrane transport and the ATP synthase. Cytochrome c oxidase is the component of the respiratory chain that catalyzes the reduction of oxygen to water. Electrons originating from reduced cytochrome c in the intermembrane space (IMS) are transferred via the dinuclear copper A center (CU(A)) of subunit 2 and heme A of subunit 1 to the active site in subunit 1, a binuclear center (BNC) formed by heme A3 and copper B (CU(B)). The BNC reduces molecular oxygen to 2 water molecules using 4 electrons from cytochrome c in the IMS and 4 protons from the mitochondrial matrix. The chain is Cytochrome c oxidase subunit 2 (COX2) from Phytophthora megasperma (Potato pink rot fungus).